We begin with the raw amino-acid sequence, 385 residues long: MKNITILGATGSIGTQTLDVIRKGNEELKLVAISANKSYKKVIEIIKEFKPKYAVLMEENAFKIVEDFCVDSKIDTKVLKGMEGMIYISTLEEINTVVTSVVGMIGLVPTIKAIESGKDIALANKETLVVAGELVISKAKEHNVNILPVDSEHGAIFQCLRGNKKEEVKNIIVTASGGPFRGKKKEELIDVKPEHALKHPKWNMGRKISIDSATLMNKGLEVIEAHFLFGVDYENIKVVVHPQSIVHSMVEYKDGSVIAQMATPDMKLPIQYALNYPNRKESQIEPLDFYKISNLTFEKPDMDTFLPLKLAYEAGKKGGVMPAILNGANEVAVDLFLKGKIEFLQIGDLLQECMNKFYKSMEATLENVISVDKEVREYLGKKYDI.

The NADPH site is built by Thr10, Gly11, Ser12, Ile13, Lys37, and Asn124. 1-deoxy-D-xylulose 5-phosphate is bound at residue Lys125. NADPH is bound at residue Glu126. Mn(2+) is bound at residue Asp150. 4 residues coordinate 1-deoxy-D-xylulose 5-phosphate: Ser151, Glu152, Ser176, and His199. Residue Glu152 coordinates Mn(2+). Residue Gly205 coordinates NADPH. 1-deoxy-D-xylulose 5-phosphate is bound by residues Ser212, Asn217, Lys218, and Glu221. Glu221 contacts Mn(2+).

It belongs to the DXR family. Mg(2+) is required as a cofactor. The cofactor is Mn(2+).

The catalysed reaction is 2-C-methyl-D-erythritol 4-phosphate + NADP(+) = 1-deoxy-D-xylulose 5-phosphate + NADPH + H(+). It participates in isoprenoid biosynthesis; isopentenyl diphosphate biosynthesis via DXP pathway; isopentenyl diphosphate from 1-deoxy-D-xylulose 5-phosphate: step 1/6. In terms of biological role, catalyzes the NADPH-dependent rearrangement and reduction of 1-deoxy-D-xylulose-5-phosphate (DXP) to 2-C-methyl-D-erythritol 4-phosphate (MEP). This is 1-deoxy-D-xylulose 5-phosphate reductoisomerase from Clostridium botulinum (strain Loch Maree / Type A3).